The following is a 455-amino-acid chain: Homeobox protein 14 (455 aa).

5 stretches are compositionally biased toward low complexity: residues 1–16, 24–39, 81–118, 179–239, and 263–294; these read MNHN…KNNS, SSRS…SSSG, TTTT…ESPN, ESPN…SPSF, and NNNN…TNNN. Disordered stretches follow at residues 1-53, 67-121, 178-239, and 258-296; these read MNHN…SSIN, KQTK…NCNK, SESP…SPSF, and TLLS…NNGD. 2 DNA-binding regions (homeobox) span residues 310-369 and 372-431; these read KSGQ…SKSG and SYAK…NKLS. The interval 431–455 is disordered; the sequence is SSKANQDNDNNNNNENNDDSYSDEG. A compositionally biased stretch (low complexity) spans 435-445; sequence NQDNDNNNNNE. Residues 446–455 are compositionally biased toward acidic residues; that stretch reads NNDDSYSDEG.

Its subcellular location is the nucleus. Its function is as follows. Putative transcription factor. This is Homeobox protein 14 (hbx14) from Dictyostelium discoideum (Social amoeba).